The sequence spans 474 residues: Probable periplasmic serine endoprotease DegP-like (474 aa).

An N-terminal signal peptide occupies residues M1–A26. Catalysis depends on charge relay system residues H116, D146, and S219. Residues G217–S219 and L274–I278 each bind substrate. PDZ domains lie at L263 to G354 and T360 to G462.

It belongs to the peptidase S1C family.

The protein localises to the periplasm. The enzyme catalyses Acts on substrates that are at least partially unfolded. The cleavage site P1 residue is normally between a pair of hydrophobic residues, such as Val-|-Val.. Might be efficient in the degradation of transiently denatured and unfolded proteins which accumulate in the periplasm following stress conditions. This is Probable periplasmic serine endoprotease DegP-like (mucD) from Halomonas elongata (strain ATCC 33173 / DSM 2581 / NBRC 15536 / NCIMB 2198 / 1H9).